A 308-amino-acid polypeptide reads, in one-letter code: Putative protein TIC 214 N-terminal part (308 aa).

The next 6 membrane-spanning stretches (helical) occupy residues 18 to 38 (IINS…FSIG), 64 to 84 (FITG…HLAL), 87 to 107 (PHTI…WNNH), 124 to 144 (LSIQ…HFIL), 172 to 192 (VGWL…LSWI), and 215 to 235 (IFSI…PSPI). Over residues 239–249 (KLKETSEMEER) the composition is skewed to basic and acidic residues. A disordered region spans residues 239–308 (KLKETSEMEE…RDPSEWKGNI (70 aa)). Positions 250–262 (GESEEETDVEIET) are enriched in acidic residues. The span at 264 to 273 (SETKETKQEQ) shows a compositional bias: basic and acidic residues. The span at 275–293 (GSTEEDPSLCSEEQEDPDK) shows a compositional bias: acidic residues. Positions 294 to 308 (LDETGRDPSEWKGNI) are enriched in basic and acidic residues.

It belongs to the TIC214 family. In terms of assembly, part of the Tic complex.

The protein localises to the plastid. It localises to the chloroplast inner membrane. Involved in protein precursor import into chloroplasts. May be part of an intermediate translocation complex acting as a protein-conducting channel at the inner envelope. In Piper cenocladum (Ant piper), this protein is Putative protein TIC 214 N-terminal part.